Reading from the N-terminus, the 739-residue chain is Phosphoribosylformylglycinamidine synthase subunit PurL (739 aa).

His-55 is an active-site residue. Positions 58 and 97 each coordinate ATP. Glu-99 contacts Mg(2+). Substrate is bound by residues 100-103 (SHNH) and Arg-122. His-101 (proton acceptor) is an active-site residue. Residue Asp-123 participates in Mg(2+) binding. Gln-246 is a binding site for substrate. Asp-276 lines the Mg(2+) pocket. Position 320-322 (320-322 (ESQ)) interacts with substrate. Asp-502 and Gly-539 together coordinate ATP. Asn-540 lines the Mg(2+) pocket. A substrate-binding site is contributed by Ser-542.

Belongs to the FGAMS family. As to quaternary structure, monomer. Part of the FGAM synthase complex composed of 1 PurL, 1 PurQ and 2 PurS subunits.

The protein localises to the cytoplasm. It carries out the reaction N(2)-formyl-N(1)-(5-phospho-beta-D-ribosyl)glycinamide + L-glutamine + ATP + H2O = 2-formamido-N(1)-(5-O-phospho-beta-D-ribosyl)acetamidine + L-glutamate + ADP + phosphate + H(+). Its pathway is purine metabolism; IMP biosynthesis via de novo pathway; 5-amino-1-(5-phospho-D-ribosyl)imidazole from N(2)-formyl-N(1)-(5-phospho-D-ribosyl)glycinamide: step 1/2. Its function is as follows. Part of the phosphoribosylformylglycinamidine synthase complex involved in the purines biosynthetic pathway. Catalyzes the ATP-dependent conversion of formylglycinamide ribonucleotide (FGAR) and glutamine to yield formylglycinamidine ribonucleotide (FGAM) and glutamate. The FGAM synthase complex is composed of three subunits. PurQ produces an ammonia molecule by converting glutamine to glutamate. PurL transfers the ammonia molecule to FGAR to form FGAM in an ATP-dependent manner. PurS interacts with PurQ and PurL and is thought to assist in the transfer of the ammonia molecule from PurQ to PurL. The protein is Phosphoribosylformylglycinamidine synthase subunit PurL of Lactiplantibacillus plantarum (strain ATCC BAA-793 / NCIMB 8826 / WCFS1) (Lactobacillus plantarum).